Reading from the N-terminus, the 96-residue chain is Dynein light chain roadblock-type 2 (96 aa).

An N-acetylalanine modification is found at alanine 2.

Belongs to the GAMAD family. In terms of assembly, homodimer. The cytoplasmic dynein 1 complex consists of two catalytic heavy chains (HCs) and a number of non-catalytic subunits presented by intermediate chains (ICs), light intermediate chains (LICs) and light chains (LCs); the composition seems to vary in respect to the IC, LIC and LC composition. The heavy chain homodimer serves as a scaffold for the probable homodimeric assembly of the respective non-catalytic subunits. The ICs and LICs bind directly to the HC dimer and the LCs assemble on the IC dimer. Interacts with DYNC1I1 and DYNC1I2. Self-associates. Interacts with DYNLRB1. High expression in heart, brain, placenta, skeletal muscle, prostate and small intestine; moderate in kidney, pancreas, spleen, testis, ovary and colon; low in lung, liver, thymus and leukocyte.

It is found in the cytoplasm. The protein localises to the cytoskeleton. Its function is as follows. Acts as one of several non-catalytic accessory components of the cytoplasmic dynein 1 complex that are thought to be involved in linking dynein to cargos and to adapter proteins that regulate dynein function. Cytoplasmic dynein 1 acts as a motor for the intracellular retrograde motility of vesicles and organelles along microtubules. This Homo sapiens (Human) protein is Dynein light chain roadblock-type 2 (DYNLRB2).